The chain runs to 591 residues: Maintenance of mitochondrial morphology protein 1 (591 aa).

Residues 1-83 (MGFNIPWNGT…AQPSLSFTQG (83 aa)) are Lumenal-facing. Residues 84–104 (LLVGQLSVVLLIGAFIKFFIF) traverse the membrane as a helical segment. Over 105–591 (GEAPPPPSRS…GSMPDSVAVT (487 aa)) the chain is Cytoplasmic. 4 disordered regions span residues 138–159 (PRTLREKPSTSNILRPVPSSST), 170–189 (YSATPTNPTSKHGRSRVHHS), 334–398 (PGTS…KHAH), and 479–591 (EAEA…VAVT). 2 stretches are compositionally biased toward polar residues: residues 146–159 (STSNILRPVPSSST) and 170–179 (YSATPTNPTS). A compositionally biased stretch (basic residues) spans 180-189 (KHGRSRVHHS). An SMP-LTD domain is found at 192–462 (QPESLDWFNV…EPRVQVVGLP (271 aa)). Over residues 336–371 (TSDQTMGPSASPPNQSTSTETASINDQTSEGQSTQR) the composition is skewed to polar residues. Residues 379–389 (PTNSTPTAATA) show a composition bias toward low complexity. 2 stretches are compositionally biased toward gly residues: residues 496 to 525 (TAGGDGMRGRGGGGGGGGLRGNSSGRGMGY) and 536 to 550 (GDGGTGVVQGQGAGG). Residues 563 to 578 (GGDDGEGPGRRSDERF) are compositionally biased toward basic and acidic residues.

It belongs to the MMM1 family. In terms of assembly, homodimer. Component of the ER-mitochondria encounter structure (ERMES) or MDM complex, composed of MMM1, MDM10, MDM12 and MDM34. An MMM1 homodimer associates with one molecule of MDM12 on each side in a pairwise head-to-tail manner, and the SMP-LTD domains of MMM1 and MDM12 generate a continuous hydrophobic tunnel for phospholipid trafficking.

Its subcellular location is the endoplasmic reticulum membrane. Its function is as follows. Component of the ERMES/MDM complex, which serves as a molecular tether to connect the endoplasmic reticulum (ER) and mitochondria. Components of this complex are involved in the control of mitochondrial shape and protein biogenesis, and function in nonvesicular lipid trafficking between the ER and mitochondria. The MDM12-MMM1 subcomplex functions in the major beta-barrel assembly pathway that is responsible for biogenesis of all outer membrane beta-barrel proteins, and acts in a late step after the SAM complex. The MDM10-MDM12-MMM1 subcomplex further acts in the TOM40-specific pathway after the action of the MDM12-MMM1 complex. Essential for establishing and maintaining the structure of mitochondria and maintenance of mtDNA nucleoids. This chain is Maintenance of mitochondrial morphology protein 1, found in Ajellomyces capsulatus (strain G186AR / H82 / ATCC MYA-2454 / RMSCC 2432) (Darling's disease fungus).